Here is a 132-residue protein sequence, read N- to C-terminus: Agouti-signaling protein (132 aa).

Residues 1–22 form the signal peptide; sequence MDVTRLLLATLLVFLCFFTAYS. Residue asparagine 39 is glycosylated (N-linked (GlcNAc...) asparagine). A disordered region spans residues 61-87; that stretch reads QISRKEAEKKRSSKKEASMKKVARPRT. Residues 63–79 show a composition bias toward basic and acidic residues; that stretch reads SRKEAEKKRSSKKEASM. 5 disulfides stabilise this stretch: cysteine 93–cysteine 108, cysteine 100–cysteine 114, cysteine 107–cysteine 125, cysteine 111–cysteine 132, and cysteine 116–cysteine 123. In terms of domain architecture, Agouti spans 93–132; that stretch reads CVATRDSCKPPAPACCDPCASCQCRFFRSACSCRVLSLNC.

The protein resides in the secreted. Functionally, involved in the regulation of melanogenesis. The binding of ASP to MC1R precludes alpha-MSH initiated signaling and thus blocks production of cAMP, leading to a down-regulation of eumelanogenesis (brown/black pigment) and thus increasing synthesis of pheomelanin (yellow/red pigment). This is Agouti-signaling protein (ASIP) from Macaca maura (Moor macaque).